Reading from the N-terminus, the 260-residue chain is Sodium channel modifier 1 (260 aa).

The short motif at 4–20 (KRDGDDSSQLNVLKKRR) is the Bipartite nuclear localization signal element. The segment at 42–74 (YACTVCHHRPVFNTIDMLSVHRTGKKHLGGLQR) adopts a Matrin-type zinc-finger fold. The segment at 143 to 260 (RNVYDPHSGP…EEEPPALPPS (118 aa)) is disordered. Polar residues predominate over residues 166–187 (PGPSQPHTSLHSPPTGPCSSPT). The span at 202 to 221 (KGEEKFRKEIADPERERNME) shows a compositional bias: basic and acidic residues. Residues 245–254 (VEFDSDEEEP) are compositionally biased toward acidic residues.

As to quaternary structure, component of the minor spliceosome, which splices U12-type introns.

Its subcellular location is the nucleus. It is found in the nucleoplasm. The protein localises to the nucleus speckle. Its function is as follows. As a component of the minor spliceosome, involved in the splicing of U12-type introns in pre-mRNAs. In Xenopus laevis (African clawed frog), this protein is Sodium channel modifier 1 (scnm1).